We begin with the raw amino-acid sequence, 155 residues long: Eosinophil cationic protein (155 aa).

Residues 1 to 25 (MGLKLLESRLCLLLSLGLVLMLASC) form the signal peptide. The active-site Proton acceptor is His38. Intrachain disulfides connect Cys47/Cys106, Cys61/Cys118, Cys79/Cys133, and Cys86/Cys94. Position 62–66 (62–66 (KDINT)) interacts with substrate. N-linked (GlcNAc...) asparagine glycans are attached at residues Asn88 and Asn107. The active-site Proton donor is the His150.

It belongs to the pancreatic ribonuclease family.

The protein resides in the cytoplasmic granule. In terms of biological role, cytotoxin and helminthotoxin with ribonuclease activity. Possesses a wide variety of biological activities. The sequence is that of Eosinophil cationic protein (Rnase3) from Rattus norvegicus (Rat).